A 1938-amino-acid polypeptide reads, in one-letter code: Myosin-6 (1938 aa).

In terms of domain architecture, Myosin N-terminal SH3-like spans 31 to 80 (DIRTECFVPDDKEEYVKAKIVSREGGKVTAETENGKTVTVKEDQVMQQNP). The region spanning 84-779 (DKIEDMAMLT…LLGLLEEMRD (696 aa)) is the Myosin motor domain. At lysine 128 the chain carries N6,N6,N6-trimethyllysine. An ATP-binding site is contributed by 177-184 (GESGAGKT). Threonine 378 bears the Phosphothreonine mark. Serine 416 carries the post-translational modification Phosphoserine. Actin-binding regions lie at residues 656 to 678 (LNKL…IPNE) and 758 to 772 (KFGH…GLLG). The IQ domain maps to 782–811 (LSRIITRIQAQARGQLMRIEFKKMVERRDA). Calmodulin-binding stretches follow at residues 789–806 (IQAQ…KKMV) and 815–832 (IQWN…PWMK). A coiled-coil region spans residues 842-1938 (KSAETEKEMA…GAKQKMHDEE (1097 aa)). 2 positions are modified to phosphoserine: serine 1089 and serine 1138. At tyrosine 1260 the chain carries Phosphotyrosine. Residue serine 1270 is modified to Phosphoserine. Threonine 1276 and threonine 1283 each carry phosphothreonine. Phosphoserine is present on serine 1308. Tyrosine 1309 is modified (phosphotyrosine). Threonine 1310 is subject to Phosphothreonine. Residue serine 1511 is modified to Phosphoserine. A phosphothreonine mark is found at threonine 1514 and threonine 1680. The interval 1907 to 1938 (AEERADIAESQVNKLRAKSRDIGAKQKMHDEE) is disordered. Over residues 1924-1938 (KSRDIGAKQKMHDEE) the composition is skewed to basic and acidic residues.

The protein belongs to the TRAFAC class myosin-kinesin ATPase superfamily. Myosin family. As to quaternary structure, muscle myosin is a hexameric protein that consists of 2 heavy chain subunits (MHC), 2 alkali light chain subunits (MLC) and 2 regulatory light chain subunits (MLC-2).

The protein resides in the cytoplasm. The protein localises to the myofibril. Functionally, muscle contraction. The polypeptide is Myosin-6 (Myh6) (Rattus norvegicus (Rat)).